The sequence spans 573 residues: MQKALSFLKPYSLLAGIALILMLTELAVELMQPLLIAKIIDDGILKQDLRHVWIWGTVMIGLTVLSFAAGMLNSFYAAHVSQSFSYDTRKGLFQKIQSFSYSTFGQFSSSSYITRLTNDVTQVQNMIFMSLRFMLRAPLMIAGGIVLSLAVNVKLGFFLLVTIPILILFLLWVLRKGGALFRSVQKRLDQVNTIMQENLIAIKLIKALLRGSHEVKRFIKANTRLMEKTVSAFQLVEFTMPVLMLLMNLCILLILWAGSYSITSGSTQVGDVVAIINYATRITGALSMFPFLIMIFTRAKASGDRIGEVLETEGDEREEGTISDRLSGRIEFQHVSFRYPEMDREALRNVSFSAKPRETIAILGATGSGKSTLFQLIPRLYQPDSGRIYIDEKPVQDIPAEGLRRQIGYVPQEVLLFSGTIKENIAWGKENASLDEIMDAAKLAQIHETILKLPNGYDTVLGQRGVNLSGGQKQRISIARALIRKPAILLLDDSTSALDLQTEAKLLEAISTYHCTTLIITQKITTAMKADQILLLEDGELIEKGTHSELLSESQLYKRIYESQFGREGSESC.

Residues 15-298 (AGIALILMLT…FPFLIMIFTR (284 aa)) form the ABC transmembrane type-1 domain. A run of 6 helical transmembrane segments spans residues 17–37 (IALI…LLIA), 52–72 (VWIW…AGML), 127–147 (IFMS…GIVL), 153–173 (VKLG…LLWV), 238–258 (FTMP…LWAG), and 275–295 (IINY…LIMI). The ABC transporter domain maps to 330–563 (IEFQHVSFRY…SQLYKRIYES (234 aa)). An ATP-binding site is contributed by 364–371 (GATGSGKS).

The protein belongs to the ABC transporter superfamily.

Its subcellular location is the cell membrane. This is an uncharacterized protein from Bacillus subtilis (strain 168).